The following is a 303-amino-acid chain: Proteasome subunit beta (303 aa).

Positions 1-67 are cleaved as a propeptide — removed in mature form; by autocatalysis; sequence MTWQFPDRLS…SGGTGQLPHG (67 aa). Residue Thr-68 is the Nucleophile of the active site.

The protein belongs to the peptidase T1B family. In terms of assembly, the 20S proteasome core is composed of 14 alpha and 14 beta subunits that assemble into four stacked heptameric rings, resulting in a barrel-shaped structure. The two inner rings, each composed of seven catalytic beta subunits, are sandwiched by two outer rings, each composed of seven alpha subunits. The catalytic chamber with the active sites is on the inside of the barrel. Has a gated structure, the ends of the cylinder being occluded by the N-termini of the alpha-subunits. Is capped by the proteasome-associated ATPase, ARC.

The protein resides in the cytoplasm. It carries out the reaction Cleavage of peptide bonds with very broad specificity.. It functions in the pathway protein degradation; proteasomal Pup-dependent pathway. The formation of the proteasomal ATPase ARC-20S proteasome complex, likely via the docking of the C-termini of ARC into the intersubunit pockets in the alpha-rings, may trigger opening of the gate for substrate entry. Interconversion between the open-gate and close-gate conformations leads to a dynamic regulation of the 20S proteasome proteolysis activity. Its function is as follows. Component of the proteasome core, a large protease complex with broad specificity involved in protein degradation. The sequence is that of Proteasome subunit beta from Mycolicibacterium paratuberculosis (strain ATCC BAA-968 / K-10) (Mycobacterium paratuberculosis).